We begin with the raw amino-acid sequence, 235 residues long: Probable tetraspanin tspA (235 aa).

The Cytoplasmic segment spans residues 1 to 18 (MVDTSNLLPQTPRLLKVP). Residues 19-39 (LIILNIILWILGLVLVIVGGI) form a helical membrane-spanning segment. Over 40–68 (CVSFLSNFKDFTKASDAKSALSNLTTSIP) the chain is Extracellular. An N-linked (GlcNAc...) asparagine glycan is attached at Asn62. The helical transmembrane segment at 69-89 (AGVLVIGILFVIFTVVGCFVA) threads the bilayer. At 90–93 (YKEK) the chain is on the cytoplasmic side. The helical transmembrane segment at 94–114 (LVGLVIYCAVMLILLVILIGV) threads the bilayer. At 115–200 (GGKAITLHND…FSSKIYAVGA (86 aa)) the chain is on the extracellular side. Residues Asn139, Asn143, and Asn160 are each glycosylated (N-linked (GlcNAc...) asparagine). A helical membrane pass occupies residues 201–221 (AGLAIGIIELVAILFSLFLII). Topologically, residues 222–235 (RICRSPRTRSYDQY) are cytoplasmic.

This sequence belongs to the tetraspanin (TM4SF) family.

The protein resides in the membrane. In Dictyostelium discoideum (Social amoeba), this protein is Probable tetraspanin tspA (tspA).